The primary structure comprises 915 residues: Protein translocase subunit SecA (915 aa).

Residues Q87, G105 to T109, and D516 contribute to the ATP site. Residues Q854–E915 form a disordered region. Residues C899, C901, C910, and H911 each contribute to the Zn(2+) site.

Belongs to the SecA family. In terms of assembly, monomer and homodimer. Part of the essential Sec protein translocation apparatus which comprises SecA, SecYEG and auxiliary proteins SecDF-YajC and YidC. Requires Zn(2+) as cofactor.

It is found in the cell inner membrane. It localises to the cytoplasm. The enzyme catalyses ATP + H2O + cellular proteinSide 1 = ADP + phosphate + cellular proteinSide 2.. In terms of biological role, part of the Sec protein translocase complex. Interacts with the SecYEG preprotein conducting channel. Has a central role in coupling the hydrolysis of ATP to the transfer of proteins into and across the cell membrane, serving both as a receptor for the preprotein-SecB complex and as an ATP-driven molecular motor driving the stepwise translocation of polypeptide chains across the membrane. The polypeptide is Protein translocase subunit SecA (Cellvibrio japonicus (strain Ueda107) (Pseudomonas fluorescens subsp. cellulosa)).